We begin with the raw amino-acid sequence, 982 residues long: Glutamate [NMDA] receptor subunit 1 (982 aa).

The signal sequence occupies residues 1-22 (MRVAFIYRWLLCGAAIVNVLVA). The Extracellular portion of the chain corresponds to 23-568 (QRHTASDNPS…TLVSFLQPFS (546 aa)). 7 N-linked (GlcNAc...) asparagine glycosylation sites follow: Asn-253, Asn-309, Asn-340, Asn-392, Asn-449, Asn-476, and Asn-496. Residues 525–527 (PLT) and Arg-532 each bind glycine. A helical membrane pass occupies residues 569–589 (NTLWILVMVSVHVVALVLYLL). Topologically, residues 590–646 (DRFSPFGRFKLSHSDSNEEKALNLSSAVWFAWGVLLNSGIGEGTPRSFSARVLGMVW) are cytoplasmic. A helical transmembrane segment spans residues 647–667 (AGFAMIIVASYTANLAAFLVL). Topologically, residues 668-826 (ERPKTKLSGI…KTPNTLGLKN (159 aa)) are extracellular. An N-linked (GlcNAc...) asparagine glycan is attached at Asn-688. Residues Ser-698 and Asp-742 each contribute to the glycine site. The helical transmembrane segment at 827–847 (MAGVFILVGVGIAGGVGLIII) threads the bilayer. Residues 848 to 982 (EVIYKKHQVK…YTSDVSHLVV (135 aa)) lie on the Cytoplasmic side of the membrane. Positions 948 to 982 (LTASQLGLGKTRPQQNPLPPRYSPGYTSDVSHLVV) are disordered. The span at 972-982 (GYTSDVSHLVV) shows a compositional bias: polar residues.

Belongs to the glutamate-gated ion channel (TC 1.A.10.1) family. Forms a heteromeric NMDA channel with Nmdar2.

It localises to the cell membrane. Its subcellular location is the postsynaptic cell membrane. The protein resides in the postsynaptic density. NMDA receptor subtype of glutamate-gated ion channels with high calcium permeability and voltage-dependent sensitivity to magnesium. Mediated by glycine. This protein plays a key role in synaptic plasticity, synaptogenesis, excitotoxicity, memory acquisition and learning. It mediates neuronal functions in glutamate neurotransmission. Is involved in the cell surface targeting of NMDA receptors. Plays a role in associative learning and in long-term memory consolidation. The chain is Glutamate [NMDA] receptor subunit 1 from Drosophila grimshawi (Hawaiian fruit fly).